We begin with the raw amino-acid sequence, 166 residues long: Mitochondrial fission process protein 1 (166 aa).

The next 3 membrane-spanning stretches (helical) occupy residues 33-53 (SLVKPVVVKFSYVVAFGYVAA), 78-98 (AIAAVDTVLWQTFASVLIPGF), and 125-145 (TVTCLGLATIPFIVHPIDSFV).

This sequence belongs to the MTFP1 family.

It localises to the mitochondrion inner membrane. Its function is as follows. Involved in the mitochondrial division probably by regulating membrane fission. Loss-of-function leads to apoptosis. In Caenorhabditis elegans, this protein is Mitochondrial fission process protein 1 (mtp-18).